The chain runs to 318 residues: Serine protease 41 (318 aa).

An N-terminal signal peptide occupies residues 1–19; the sequence is MGARGALLLALLLARAGLG. Residues 20–54 constitute a propeptide that is removed on maturation; it reads KPGELGALQAGPGAARRPGGGGREEACGHREIHAL. The 243-residue stretch at 55–297 folds into the Peptidase S1 domain; that stretch reads VAGGVESARG…YFHWIRRVMS (243 aa). A disulfide bond links cysteine 80 and cysteine 96. Catalysis depends on charge relay system residues histidine 95 and aspartate 147. Disulfide bonds link cysteine 181-cysteine 255, cysteine 215-cysteine 234, and cysteine 245-cysteine 273. The N-linked (GlcNAc...) asparagine glycan is linked to asparagine 211. Residue serine 249 is the Charge relay system of the active site. Residue asparagine 284 is glycosylated (N-linked (GlcNAc...) asparagine). Serine 299 carries GPI-anchor amidated serine lipidation. Positions 300 to 318 are cleaved as a propeptide — removed in mature form; it reads TPRPNPSQLLLLLALLWAP.

Belongs to the peptidase S1 family. In terms of processing, N-glycosylated.

Its subcellular location is the cell membrane. This chain is Serine protease 41, found in Homo sapiens (Human).